The following is a 315-amino-acid chain: Porphobilinogen deaminase (315 aa).

Position 241 is an S-(dipyrrolylmethanemethyl)cysteine (cysteine 241).

The protein belongs to the HMBS family. As to quaternary structure, monomer. The cofactor is dipyrromethane.

The catalysed reaction is 4 porphobilinogen + H2O = hydroxymethylbilane + 4 NH4(+). The protein operates within porphyrin-containing compound metabolism; protoporphyrin-IX biosynthesis; coproporphyrinogen-III from 5-aminolevulinate: step 2/4. In terms of biological role, tetrapolymerization of the monopyrrole PBG into the hydroxymethylbilane pre-uroporphyrinogen in several discrete steps. This is Porphobilinogen deaminase from Nitratidesulfovibrio vulgaris (strain DP4) (Desulfovibrio vulgaris).